The sequence spans 193 residues: Zinc finger CCHC domain-containing protein 17 (193 aa).

The S1 motif; truncated domain maps to 1–40; sequence MSSCRVDKPSEIVDVGDKVWVKLIGREMKNDRIKVSLSMK. At serine 66 the chain carries Phosphoserine. The segment at 83-100 adopts a CCHC-type zinc-finger fold; that stretch reads TTCKKCGCKGHFAKDCFM. Lysine 96 is subject to N6-acetyllysine. The tract at residues 113–193 is disordered; it reads EEEEKEEAKS…KKKHKKKHKE (81 aa). A compositionally biased stretch (basic and acidic residues) spans 118–129; the sequence is EEAKSAEFEKPV. Over residues 134 to 150 the composition is skewed to basic residues; that stretch reads PSRKRKKEKKKKKHRDR. Serine 135 carries the post-translational modification Phosphoserine. Basic and acidic residues predominate over residues 163–177; sequence DTGKRARHTSKDSKA. Positions 178 to 193 are enriched in basic residues; it reads AKKKKKKKKHKKKHKE.

May interact with PNN. May associate with the 60 S ribosomal subunit.

The protein resides in the nucleus. Its subcellular location is the nucleolus. In Macaca fascicularis (Crab-eating macaque), this protein is Zinc finger CCHC domain-containing protein 17 (ZCCHC17).